A 286-amino-acid polypeptide reads, in one-letter code: Bifunctional protein FolD (286 aa).

NADP(+) contacts are provided by residues 165–167, S190, and V231; that span reads GRS.

The protein belongs to the tetrahydrofolate dehydrogenase/cyclohydrolase family. As to quaternary structure, homodimer.

The catalysed reaction is (6R)-5,10-methylene-5,6,7,8-tetrahydrofolate + NADP(+) = (6R)-5,10-methenyltetrahydrofolate + NADPH. The enzyme catalyses (6R)-5,10-methenyltetrahydrofolate + H2O = (6R)-10-formyltetrahydrofolate + H(+). It functions in the pathway one-carbon metabolism; tetrahydrofolate interconversion. Its function is as follows. Catalyzes the oxidation of 5,10-methylenetetrahydrofolate to 5,10-methenyltetrahydrofolate and then the hydrolysis of 5,10-methenyltetrahydrofolate to 10-formyltetrahydrofolate. This is Bifunctional protein FolD from Bacillus cereus (strain G9842).